The following is a 230-amino-acid chain: Cytidylate kinase (230 aa).

12–20 (GPSGTGKST) contacts ATP.

This sequence belongs to the cytidylate kinase family. Type 1 subfamily.

The protein localises to the cytoplasm. It carries out the reaction CMP + ATP = CDP + ADP. The catalysed reaction is dCMP + ATP = dCDP + ADP. In Corynebacterium efficiens (strain DSM 44549 / YS-314 / AJ 12310 / JCM 11189 / NBRC 100395), this protein is Cytidylate kinase.